Here is a 303-residue protein sequence, read N- to C-terminus: Acetylglutamate kinase (303 aa).

Substrate contacts are provided by residues 69–70 (GG), Arg91, and Asn190.

This sequence belongs to the acetylglutamate kinase family. ArgB subfamily.

The protein resides in the cytoplasm. The enzyme catalyses N-acetyl-L-glutamate + ATP = N-acetyl-L-glutamyl 5-phosphate + ADP. Its pathway is amino-acid biosynthesis; L-arginine biosynthesis; N(2)-acetyl-L-ornithine from L-glutamate: step 2/4. Its function is as follows. Catalyzes the ATP-dependent phosphorylation of N-acetyl-L-glutamate. The sequence is that of Acetylglutamate kinase from Nocardia farcinica (strain IFM 10152).